Here is a 134-residue protein sequence, read N- to C-terminus: MSDSLERLYLAVLAARDLDPATSRTARLFQRGPSKMAKKLAEEAIEVVIDAVNGDTDAVVRESADLLYNLTVLWASAGVRPEDVWREMTRREDMLGIAEKLPKSAMKLPKVASPRVAARRPIVALEGRTARKRH.

The protein belongs to the PRA-PH family.

It localises to the cytoplasm. It carries out the reaction 1-(5-phospho-beta-D-ribosyl)-ATP + H2O = 1-(5-phospho-beta-D-ribosyl)-5'-AMP + diphosphate + H(+). Its pathway is amino-acid biosynthesis; L-histidine biosynthesis; L-histidine from 5-phospho-alpha-D-ribose 1-diphosphate: step 2/9. The chain is Phosphoribosyl-ATP pyrophosphatase 2 (hisE2) from Bradyrhizobium diazoefficiens (strain JCM 10833 / BCRC 13528 / IAM 13628 / NBRC 14792 / USDA 110).